A 247-amino-acid polypeptide reads, in one-letter code: ATP synthase subunit a, chloroplastic (247 aa).

Helical transmembrane passes span 38 to 58 (QVLI…IIAV), 95 to 115 (VPFI…GALL), 134 to 154 (INTT…AGLT), 199 to 219 (LVVV…VMFL), and 220 to 240 (GLFT…AYIG).

Belongs to the ATPase A chain family. In terms of assembly, F-type ATPases have 2 components, CF(1) - the catalytic core - and CF(0) - the membrane proton channel. CF(1) has five subunits: alpha(3), beta(3), gamma(1), delta(1), epsilon(1). CF(0) has four main subunits: a, b, b' and c.

Its subcellular location is the plastid. The protein localises to the chloroplast thylakoid membrane. Its function is as follows. Key component of the proton channel; it plays a direct role in the translocation of protons across the membrane. The chain is ATP synthase subunit a, chloroplastic from Morus indica (Mulberry).